We begin with the raw amino-acid sequence, 63 residues long: Cecropin-1 (63 aa).

Positions 1 to 21 (MNFNKVFILVAIVIAIFAGQT) are cleaved as a signal peptide. The propeptide occupies 22–23 (EA). Residue R62 is modified to Arginine amide.

It belongs to the cecropin family.

The protein localises to the secreted. Its function is as follows. Cecropins have lytic and antibacterial activity against several Gram-positive and Gram-negative bacteria. This chain is Cecropin-1 (CEC1), found in Ceratitis capitata (Mediterranean fruit fly).